A 49-amino-acid polypeptide reads, in one-letter code: MARYRCCRSHSRSRCRRRRRRSRRRRRRSCGRRRRAGYRRYTVRYRRRR.

A disordered region spans residues 1-49 (MARYRCCRSHSRSRCRRRRRRSRRRRRRSCGRRRRAGYRRYTVRYRRRR).

This sequence belongs to the protamine P1 family. Testis.

It localises to the nucleus. The protein resides in the chromosome. Protamines substitute for histones in the chromatin of sperm during the haploid phase of spermatogenesis. They compact sperm DNA into a highly condensed, stable and inactive complex. The sequence is that of Sperm protamine P1 (PRM1) from Macronycteris commersonii (Commerson's roundleaf bat).